The primary structure comprises 909 residues: Protein virilizer (909 aa).

Over residues 746 to 784 (STSKNTNTNVSKQQQQPQNSTPCSSNRFLFNKSSLISQE) the composition is skewed to polar residues. Residues 746-824 (STSKNTNTNV…TNMTRQPTTL (79 aa)) are disordered. Over residues 785–799 (SNGSNNNSGTQGPGS) the composition is skewed to low complexity. Residues 800 to 810 (MNESYSLDNSF) are compositionally biased toward polar residues. Residues 811 to 824 (NTTNTNMTRQPTTL) are compositionally biased toward low complexity. 2 positions are modified to phosphoserine: S856 and S898.

The protein belongs to the vir family. As to quaternary structure, component of the MIS (mRNA N6-methyladenosine (m6A) methylation) complex, at least composed of IME4, KAR4, MUM2, SLZ1, and VIR1. Interacts with KAR4. Interacts with SLZ1. Interacts with MUM2. Interacts with IME4.

Its subcellular location is the cytoplasm. It is found in the nucleus. The protein resides in the nucleolus. Component of the MIS complex, a complex that mediates N6-methyladenosine (m6A) methylation of meiotic mRNAs and is required for initiation of meiosis, progression through the meiotic divisions and sporulation. In the complex, performs a scaffolding role stabilizing the other complex members. The protein is Protein virilizer of Saccharomyces cerevisiae (strain ATCC 204508 / S288c) (Baker's yeast).